Here is a 177-residue protein sequence, read N- to C-terminus: Austinoid biosynthesis clusters protein F (177 aa).

This sequence belongs to the trt14 isomerase family. In terms of assembly, homodimer.

Its pathway is secondary metabolite biosynthesis; terpenoid biosynthesis. Functionally, part of the gene cluster B that mediates the biosynthesis of austinol and dehydroaustinol, two fungal meroterpenoids. The first step of the pathway is the synthesis of 3,5-dimethylorsellinic acid by the polyketide synthase ausA. 3,5-dimethylorsellinic acid is then prenylated by the polyprenyl transferase ausN. Further epoxidation by the FAD-dependent monooxygenase ausM and cyclization by the probable terpene cyclase ausL lead to the formation of protoaustinoid A. Protoaustinoid A is then oxidized to spiro-lactone preaustinoid A3 by the combined action of the FAD-binding monooxygenases ausB and ausC, and the dioxygenase ausE. Acid-catalyzed keto-rearrangement and ring contraction of the tetraketide portion of preaustinoid A3 by ausJ lead to the formation of preaustinoid A4. The aldo-keto reductase ausK, with the help of ausH, is involved in the next step by transforming preaustinoid A4 into isoaustinone which is in turn hydroxylated by the P450 monooxygenase ausI to form austinolide. Finally, the cytochrome P450 monooxygenase ausG modifies austinolide to austinol. Austinol can be further modified to dehydroaustinol which forms a diffusible complex with diorcinol that initiates conidiation. Due to genetic rearrangements of the clusters and the subsequent loss of some enzymes, the end products of the Emericella nidulans austinoid biosynthesis clusters are austinol and dehydroaustinol, even if additional enzymes, such as the O-acetyltransferase ausQ and the cytochrome P450 monooxygenase ausR are still functional. The chain is Austinoid biosynthesis clusters protein F from Emericella nidulans (strain FGSC A4 / ATCC 38163 / CBS 112.46 / NRRL 194 / M139) (Aspergillus nidulans).